Reading from the N-terminus, the 745-residue chain is uncharacterized protein (745 aa).

An HTH araC/xylS-type domain is found at 158–256; sequence NQVCDYIELH…HQTPKQYRGD (99 aa). 2 DNA-binding regions (H-T-H motif) span residues 175 to 196 and 223 to 246; these read SELS…AESL and ITDI…KHFT.

This is an uncharacterized protein from Staphylococcus aureus (strain MRSA252).